A 472-amino-acid polypeptide reads, in one-letter code: Tryptophan--tRNA ligase, cytoplasmic (472 aa).

Positions 9–65 constitute a WHEP-TRS domain; sequence SPLELFNSIATQGELVRSLKAGNASKDEIDSAVKMLLSLKMSYKAAMGEDYKANCPP. The residue at position 155 (lysine 155) is an N6-succinyllysine. The short motif at 165–174 is the 'HIGH' region element; sequence PSSEAMHVGH. The 'KMSKS' region signature appears at 350–354; the sequence is KMSAS. Serine 352 is subject to Phosphoserine.

It belongs to the class-I aminoacyl-tRNA synthetase family. Homodimer. Interacts with oxidized form of GAPDH. In terms of processing, proteolytic cleavage generates 2 forms; T1-TrpRS and T2-TrpRS.

The protein resides in the cytoplasm. The catalysed reaction is tRNA(Trp) + L-tryptophan + ATP = L-tryptophyl-tRNA(Trp) + AMP + diphosphate + H(+). In terms of biological role, catalyzes the attachment of tryptophan to tRNA(Trp) in a two-step reaction: tryptophan is first activated by ATP to form Trp-AMP and then transferred to the acceptor end of the tRNA(Trp). Could also possess an angiostatic activity. This Pongo abelii (Sumatran orangutan) protein is Tryptophan--tRNA ligase, cytoplasmic (WARS1).